A 318-amino-acid chain; its full sequence is MNRFSTRLMGATATPPPAPPKARSNENLDKIDMSLDDIIKLNRKEGKKQNFPRLNRRLQQSSARQFRMRVRWGIQQNSGFGKNSLSRRGRVMPGKRRPYGVITGLAARKATGIRKGISPMNRPPLSDKNIERYFPALKRKANLLRQNEVQRKPVAALKRPNQLNRKNNIPNNFTRSGNKLSHQKDTRQATFLFRRGLKVQAQLNSEQLLDDVVAKRTRQWRTSTTNGGILTVSIDNPGAVQCPVTQKPRLTRTAVPSFLTKRDQSDIKKVPKGVPLQFDINSVGKQTGMTLNERFGILKEQRATLTFNKGGSRFVTVG.

M1 is modified (N-acetylmethionine). The disordered stretch occupies residues 1–27 (MNRFSTRLMGATATPPPAPPKARSNEN). At T14 the chain carries Phosphothreonine. The residue at position 24 (S24) is a Phosphoserine. The UAP56-binding motif motif lies at 27–45 (NLDKIDMSLDDIIKLNRKE). Residues S61 and S118 each carry the phosphoserine modification. K140 is covalently cross-linked (Glycyl lysine isopeptide (Lys-Gly) (interchain with G-Cter in SUMO1)). Positions 163–180 (LNRKNNIPNNFTRSGNKL) are enriched in polar residues. The disordered stretch occupies residues 163–183 (LNRKNNIPNNFTRSGNKLSHQ). Residue K261 forms a Glycyl lysine isopeptide (Lys-Gly) (interchain with G-Cter in SUMO2) linkage.

Belongs to the UIF family. In terms of assembly, interacts with DDX39B/UAP56 and NXF1; interaction with DDX39B/UAP56 and NXF1 are mutually exclusive. Interacts with SSRP1; required for its recruitment to mRNAs. Interacts with CHTOP.

Its subcellular location is the nucleus. The protein localises to the nucleoplasm. It localises to the nucleus speckle. Functionally, required for mRNA export from the nucleus to the cytoplasm. Acts as an adapter that uses the DDX39B/UAP56-NFX1 pathway to ensure efficient mRNA export and delivering to the nuclear pore. Associates with spliced and unspliced mRNAs simultaneously with ALYREF/THOC4. This Bos taurus (Bovine) protein is UAP56-interacting factor (FYTTD1).